The chain runs to 264 residues: Thymidylate synthase (264 aa).

Arg-21 lines the dUMP pocket. Position 51 (His-51) interacts with (6R)-5,10-methylene-5,6,7,8-tetrahydrofolate. 126-127 (RR) is a dUMP binding site. Residue Cys-146 is the Nucleophile of the active site. Residues 166-169 (RSCD), Asn-177, and 207-209 (HLY) each bind dUMP. (6R)-5,10-methylene-5,6,7,8-tetrahydrofolate is bound at residue Asp-169. Ala-263 is a (6R)-5,10-methylene-5,6,7,8-tetrahydrofolate binding site.

Belongs to the thymidylate synthase family. Bacterial-type ThyA subfamily. Homodimer.

It is found in the cytoplasm. It carries out the reaction dUMP + (6R)-5,10-methylene-5,6,7,8-tetrahydrofolate = 7,8-dihydrofolate + dTMP. It participates in pyrimidine metabolism; dTTP biosynthesis. Catalyzes the reductive methylation of 2'-deoxyuridine-5'-monophosphate (dUMP) to 2'-deoxythymidine-5'-monophosphate (dTMP) while utilizing 5,10-methylenetetrahydrofolate (mTHF) as the methyl donor and reductant in the reaction, yielding dihydrofolate (DHF) as a by-product. This enzymatic reaction provides an intracellular de novo source of dTMP, an essential precursor for DNA biosynthesis. The chain is Thymidylate synthase from Buchnera aphidicola subsp. Baizongia pistaciae (strain Bp).